The sequence spans 173 residues: Nicotinamide-nucleotide adenylyltransferase (173 aa).

The protein belongs to the archaeal NMN adenylyltransferase family.

It localises to the cytoplasm. The enzyme catalyses beta-nicotinamide D-ribonucleotide + ATP + H(+) = diphosphate + NAD(+). The protein operates within cofactor biosynthesis; NAD(+) biosynthesis; NAD(+) from nicotinamide D-ribonucleotide: step 1/1. This chain is Nicotinamide-nucleotide adenylyltransferase, found in Methanosarcina acetivorans (strain ATCC 35395 / DSM 2834 / JCM 12185 / C2A).